The following is a 190-amino-acid chain: Probable DNA replication complex GINS protein PSF2 (190 aa).

This sequence belongs to the GINS2/PSF2 family. As to quaternary structure, component of the GINS complex which is a heterotetramer of gins1, gins2, gins3 and gins4.

The protein localises to the nucleus. Its function is as follows. The GINS complex plays an essential role in the initiation of DNA replication. This Brugia malayi (Filarial nematode worm) protein is Probable DNA replication complex GINS protein PSF2.